Reading from the N-terminus, the 139-residue chain is Putative pre-16S rRNA nuclease (139 aa).

This sequence belongs to the YqgF nuclease family.

Its subcellular location is the cytoplasm. In terms of biological role, could be a nuclease involved in processing of the 5'-end of pre-16S rRNA. The sequence is that of Putative pre-16S rRNA nuclease from Thermoanaerobacter pseudethanolicus (strain ATCC 33223 / 39E) (Clostridium thermohydrosulfuricum).